The sequence spans 104 residues: Cell division protein FtsL (104 aa).

The Cytoplasmic portion of the chain corresponds to 1-20; the sequence is MSKPSLTLPRIVLHDLWQHK. The helical transmembrane segment at 21 to 43 threads the bilayer; that stretch reads WILLLALLVLSNAVAVVYTSHVS. Residues 44-104 lie on the Periplasmic side of the membrane; that stretch reads RKLTTEWDQL…PSEEIVVKVP (61 aa).

The protein belongs to the FtsL family. As to quaternary structure, part of a complex composed of FtsB, FtsL and FtsQ.

The protein localises to the cell inner membrane. Essential cell division protein. May link together the upstream cell division proteins, which are predominantly cytoplasmic, with the downstream cell division proteins, which are predominantly periplasmic. This is Cell division protein FtsL from Shewanella oneidensis (strain ATCC 700550 / JCM 31522 / CIP 106686 / LMG 19005 / NCIMB 14063 / MR-1).